The primary structure comprises 261 residues: MADLFWQTSDEGSRDLVLLHGWGLNAEVWRSIEMRCAPHFRLHLVDLPGYGRSQKYGPMNLADMADEVWRYAPENALWLGWSLGGLVASRIALDHQDKVAGLITVASSPHFSAESDWPGIKPEVLHDFEHQLSKDFQRTVERFLALQTLGTDSARQDARLLKSVVLAQPMPSVEVLHVGLEILRTEDLRQPLAELAIPFLRIYGYLDGLVPRKIINILDEKWPRSVSAMMRHAAHAPFISHPDEFVGLLTEFASREVLQGR.

One can recognise an AB hydrolase-1 domain in the interval 16 to 241 (LVLLHGWGLN…HAAHAPFISH (226 aa)). Substrate is bound by residues Trp22, 82 to 83 (SL), and 143 to 147 (FLALQ). The active-site Nucleophile is Ser82. Catalysis depends on residues Asp207 and His235. Residue His235 participates in substrate binding.

It belongs to the AB hydrolase superfamily. Carboxylesterase BioH family. Monomer.

The protein resides in the cytoplasm. It catalyses the reaction 6-carboxyhexanoyl-[ACP] methyl ester + H2O = 6-carboxyhexanoyl-[ACP] + methanol + H(+). It functions in the pathway cofactor biosynthesis; biotin biosynthesis. Its function is as follows. The physiological role of BioH is to remove the methyl group introduced by BioC when the pimeloyl moiety is complete. It allows to synthesize pimeloyl-ACP via the fatty acid synthetic pathway through the hydrolysis of the ester bonds of pimeloyl-ACP esters. The sequence is that of Pimeloyl-[acyl-carrier protein] methyl ester esterase from Photorhabdus laumondii subsp. laumondii (strain DSM 15139 / CIP 105565 / TT01) (Photorhabdus luminescens subsp. laumondii).